The primary structure comprises 303 residues: UDP-N-acetylenolpyruvoylglucosamine reductase (303 aa).

One can recognise an FAD-binding PCMH-type domain in the interval 27 to 207 (KVGGISQVFY…TSISQKLQKI (181 aa)). Arg175 is an active-site residue. Residue Ser224 is the Proton donor of the active site. The active site involves Glu294.

This sequence belongs to the MurB family. FAD serves as cofactor.

The protein localises to the cytoplasm. The catalysed reaction is UDP-N-acetyl-alpha-D-muramate + NADP(+) = UDP-N-acetyl-3-O-(1-carboxyvinyl)-alpha-D-glucosamine + NADPH + H(+). The protein operates within cell wall biogenesis; peptidoglycan biosynthesis. Cell wall formation. In Orientia tsutsugamushi (strain Boryong) (Rickettsia tsutsugamushi), this protein is UDP-N-acetylenolpyruvoylglucosamine reductase.